The primary structure comprises 487 residues: Glycogen synthase (487 aa).

Lysine 20 lines the ADP-alpha-D-glucose pocket.

This sequence belongs to the glycosyltransferase 1 family. Bacterial/plant glycogen synthase subfamily.

The catalysed reaction is [(1-&gt;4)-alpha-D-glucosyl](n) + ADP-alpha-D-glucose = [(1-&gt;4)-alpha-D-glucosyl](n+1) + ADP + H(+). It participates in glycan biosynthesis; glycogen biosynthesis. Functionally, synthesizes alpha-1,4-glucan chains using ADP-glucose. The sequence is that of Glycogen synthase from Aliivibrio fischeri (strain ATCC 700601 / ES114) (Vibrio fischeri).